An 83-amino-acid polypeptide reads, in one-letter code: Normal mucosa of esophagus-specific gene 1 protein (83 aa).

This sequence belongs to the complex I NDUFA4 subunit family. As to expression, strongly expressed in vertebrae, brain, intestine and stomach.

It localises to the nucleus. The polypeptide is Normal mucosa of esophagus-specific gene 1 protein (Nmes1) (Mus musculus (Mouse)).